The following is a 99-amino-acid chain: MFNSIKRDLKRRKLYKKYESKRLLYKALISDCNLNQDLRFILTQKLNKLPRNSSQVRVKNRCILTGRGHSVYKFCRISRIKFRDLANQGLIQGCVKSSW.

This sequence belongs to the universal ribosomal protein uS14 family.

The protein resides in the mitochondrion. The chain is Small ribosomal subunit protein uS14m (RPS14) from Prototheca wickerhamii.